A 269-amino-acid chain; its full sequence is 3-methyl-2-oxobutanoate hydroxymethyltransferase (269 aa).

Aspartate 50 and aspartate 89 together coordinate Mg(2+). 3-methyl-2-oxobutanoate is bound by residues 50–51, aspartate 89, and lysine 118; that span reads DS. Glutamate 120 contributes to the Mg(2+) binding site. Glutamate 187 serves as the catalytic Proton acceptor.

It belongs to the PanB family. As to quaternary structure, homodecamer; pentamer of dimers. Mg(2+) serves as cofactor.

It is found in the cytoplasm. The enzyme catalyses 3-methyl-2-oxobutanoate + (6R)-5,10-methylene-5,6,7,8-tetrahydrofolate + H2O = 2-dehydropantoate + (6S)-5,6,7,8-tetrahydrofolate. The protein operates within cofactor biosynthesis; (R)-pantothenate biosynthesis; (R)-pantoate from 3-methyl-2-oxobutanoate: step 1/2. In terms of biological role, catalyzes the reversible reaction in which hydroxymethyl group from 5,10-methylenetetrahydrofolate is transferred onto alpha-ketoisovalerate to form ketopantoate. The sequence is that of 3-methyl-2-oxobutanoate hydroxymethyltransferase from Nitrosomonas europaea (strain ATCC 19718 / CIP 103999 / KCTC 2705 / NBRC 14298).